Consider the following 232-residue polypeptide: Peptide deformylase (232 aa).

Cys-135 and His-178 together coordinate Fe cation. Glu-179 is an active-site residue. Position 182 (His-182) interacts with Fe cation.

This sequence belongs to the polypeptide deformylase family. It depends on Fe(2+) as a cofactor.

The enzyme catalyses N-terminal N-formyl-L-methionyl-[peptide] + H2O = N-terminal L-methionyl-[peptide] + formate. Functionally, removes the formyl group from the N-terminal Met of newly synthesized proteins. Requires at least a dipeptide for an efficient rate of reaction. N-terminal L-methionine is a prerequisite for activity but the enzyme has broad specificity at other positions. This is Peptide deformylase from Deinococcus radiodurans (strain ATCC 13939 / DSM 20539 / JCM 16871 / CCUG 27074 / LMG 4051 / NBRC 15346 / NCIMB 9279 / VKM B-1422 / R1).